The chain runs to 761 residues: Elongation factor G, mitochondrial (761 aa).

The N-terminal 33 residues, 1–33, are a transit peptide targeting the mitochondrion; sequence MTSVLRGVLKTHLPRTLTLPRCARNFQTTTFLR. The 282-residue stretch at 66-347 folds into the tr-type G domain; sequence TRLRNIGISA…SVVDYLPQPN (282 aa). GTP is bound by residues 75-82, 146-150, and 200-203; these read AHIDSGKT, DTPGH, and NKMD.

This sequence belongs to the TRAFAC class translation factor GTPase superfamily. Classic translation factor GTPase family. EF-G/EF-2 subfamily.

The protein resides in the mitochondrion. Its pathway is protein biosynthesis; polypeptide chain elongation. Functionally, mitochondrial GTPase that catalyzes the GTP-dependent ribosomal translocation step during translation elongation. During this step, the ribosome changes from the pre-translocational (PRE) to the post-translocational (POST) state as the newly formed A-site-bound peptidyl-tRNA and P-site-bound deacylated tRNA move to the P and E sites, respectively. Catalyzes the coordinated movement of the two tRNA molecules, the mRNA and conformational changes in the ribosome. This is Elongation factor G, mitochondrial from Candida dubliniensis (strain CD36 / ATCC MYA-646 / CBS 7987 / NCPF 3949 / NRRL Y-17841) (Yeast).